Consider the following 154-residue polypeptide: Large ribosomal subunit protein bL17 (154 aa).

A disordered region spans residues 127-154 (TAAKQDRAKRVKGSKKAETEKEGGESAE). Basic and acidic residues predominate over residues 141 to 154 (KKAETEKEGGESAE).

The protein belongs to the bacterial ribosomal protein bL17 family. In terms of assembly, part of the 50S ribosomal subunit. Contacts protein L32.

The polypeptide is Large ribosomal subunit protein bL17 (Chlorobaculum parvum (strain DSM 263 / NCIMB 8327) (Chlorobium vibrioforme subsp. thiosulfatophilum)).